Consider the following 317-residue polypeptide: 4-hydroxy-3-methylbut-2-enyl diphosphate reductase (317 aa).

A [4Fe-4S] cluster-binding site is contributed by C12. Residues H41 and H74 each contribute to the (2E)-4-hydroxy-3-methylbut-2-enyl diphosphate site. Positions 41 and 74 each coordinate dimethylallyl diphosphate. Isopentenyl diphosphate is bound by residues H41 and H74. Position 97 (C97) interacts with [4Fe-4S] cluster. Position 125 (H125) interacts with (2E)-4-hydroxy-3-methylbut-2-enyl diphosphate. A dimethylallyl diphosphate-binding site is contributed by H125. H125 is an isopentenyl diphosphate binding site. Catalysis depends on E127, which acts as the Proton donor. (2E)-4-hydroxy-3-methylbut-2-enyl diphosphate is bound at residue T168. Residue C198 coordinates [4Fe-4S] cluster. (2E)-4-hydroxy-3-methylbut-2-enyl diphosphate contacts are provided by S226, S227, N228, and S270. Dimethylallyl diphosphate contacts are provided by S226, S227, N228, and S270. S226, S227, N228, and S270 together coordinate isopentenyl diphosphate.

It belongs to the IspH family. Homodimer. [4Fe-4S] cluster is required as a cofactor.

It carries out the reaction isopentenyl diphosphate + 2 oxidized [2Fe-2S]-[ferredoxin] + H2O = (2E)-4-hydroxy-3-methylbut-2-enyl diphosphate + 2 reduced [2Fe-2S]-[ferredoxin] + 2 H(+). The catalysed reaction is dimethylallyl diphosphate + 2 oxidized [2Fe-2S]-[ferredoxin] + H2O = (2E)-4-hydroxy-3-methylbut-2-enyl diphosphate + 2 reduced [2Fe-2S]-[ferredoxin] + 2 H(+). The protein operates within isoprenoid biosynthesis; dimethylallyl diphosphate biosynthesis; dimethylallyl diphosphate from (2E)-4-hydroxy-3-methylbutenyl diphosphate: step 1/1. It functions in the pathway isoprenoid biosynthesis; isopentenyl diphosphate biosynthesis via DXP pathway; isopentenyl diphosphate from 1-deoxy-D-xylulose 5-phosphate: step 6/6. Its function is as follows. Catalyzes the conversion of 1-hydroxy-2-methyl-2-(E)-butenyl 4-diphosphate (HMBPP) into a mixture of isopentenyl diphosphate (IPP) and dimethylallyl diphosphate (DMAPP). Acts in the terminal step of the DOXP/MEP pathway for isoprenoid precursor biosynthesis. The chain is 4-hydroxy-3-methylbut-2-enyl diphosphate reductase from Yersinia pseudotuberculosis serotype O:1b (strain IP 31758).